A 464-amino-acid polypeptide reads, in one-letter code: tRNA modification GTPase MnmE (464 aa).

The (6S)-5-formyl-5,6,7,8-tetrahydrofolate site is built by arginine 25, glutamate 87, and lysine 130. Residues 226–386 form the TrmE-type G domain; sequence GLSVVLAGQP…LREELLRIAG (161 aa). Residue asparagine 236 coordinates K(+). Residues 236–241, 255–261, and 280–283 each bind GTP; these read NVGKSS, TPIAGTT, and DTAG. Serine 240 provides a ligand contact to Mg(2+). K(+)-binding residues include threonine 255, isoleucine 257, and threonine 260. Threonine 261 provides a ligand contact to Mg(2+). Lysine 464 is a (6S)-5-formyl-5,6,7,8-tetrahydrofolate binding site.

Belongs to the TRAFAC class TrmE-Era-EngA-EngB-Septin-like GTPase superfamily. TrmE GTPase family. In terms of assembly, homodimer. Heterotetramer of two MnmE and two MnmG subunits. Requires K(+) as cofactor.

The protein localises to the cytoplasm. Its function is as follows. Exhibits a very high intrinsic GTPase hydrolysis rate. Involved in the addition of a carboxymethylaminomethyl (cmnm) group at the wobble position (U34) of certain tRNAs, forming tRNA-cmnm(5)s(2)U34. This Paraburkholderia xenovorans (strain LB400) protein is tRNA modification GTPase MnmE.